Consider the following 224-residue polypeptide: MPGGLLLGDVAPNFEANTTVGRIRFHDFLGDSWGILFSHPRDFTPVCTTELGRAAKLAPEFAKRNVKLIALSIDSVEDHLAWSKDINAYNCEEPTEKLPFPIIDDRNRELAILLGMLDPAEKDEKGMPVTARVVFVFGPDKKLKLSILYPATTGRNFDEILRVVISLQLTAEKRVATPVDWKDGDSVMVLPTIPEEEAKKLFPKGVFTKELPSGKKYLRYTPQP.

Residues 5–169 (LLLGDVAPNF…ILRVVISLQL (165 aa)) enclose the Thioredoxin domain. Residues 31 to 40 (DSWGILFSHP) form a required and sufficient for targeting to lysosomes and lamellar bodies region. Threonine 44 is modified (phosphothreonine). The active-site Cysteine sulfenic acid (-SOH) intermediate; for peroxidase activity is cysteine 47. At lysine 63 the chain carries N6-acetyllysine. Residue tyrosine 89 is modified to Phosphotyrosine. The active-site For phospholipase activity is aspartate 140. Threonine 177 is modified (phosphothreonine; by MAPK). Residue lysine 209 is modified to N6-acetyllysine; alternate. The residue at position 209 (lysine 209) is an N6-succinyllysine; alternate.

The protein belongs to the peroxiredoxin family. Prx6 subfamily. As to quaternary structure, homodimer. Interacts with GSTP1; mediates PRDX6 glutathionylation and regeneration. Interacts with APEX1. Interacts with STH. May interact with FAM168B. May interact with HTR2A. Post-translationally, irreversibly inactivated by overoxidation of Cys-47 to sulfinic acid (Cys-SO(2)H) and sulfonic acid (Cys-SO(3)H) forms upon oxidative stress. Phosphorylation at Thr-177 by MAP kinases increases the phospholipase activity of the enzyme. The phosphorylated form exhibits a greater lysophosphatidylcholine acyltransferase activity compared to the non-phosphorylated form.

The protein resides in the cytoplasm. It localises to the lysosome. It carries out the reaction a hydroperoxide + 2 glutathione = an alcohol + glutathione disulfide + H2O. The catalysed reaction is a 1,2-diacyl-sn-glycero-3-phosphocholine + H2O = a 1-acyl-sn-glycero-3-phosphocholine + a fatty acid + H(+). The enzyme catalyses a 1-acyl-sn-glycero-3-phosphocholine + an acyl-CoA = a 1,2-diacyl-sn-glycero-3-phosphocholine + CoA. It catalyses the reaction 1-hexadecanoyl-sn-glycero-3-phosphocholine + hexadecanoyl-CoA = 1,2-dihexadecanoyl-sn-glycero-3-phosphocholine + CoA. It carries out the reaction 1,2-dihexadecanoyl-sn-glycero-3-phosphocholine + H2O = 1-hexadecanoyl-sn-glycero-3-phosphocholine + hexadecanoate + H(+). Its activity is regulated as follows. MJ33 or lithium;[(2R)-1-hexadecoxy-3-(2,2,2-trifluoroethoxy)propan-2-yl] methyl phosphate inhibits its phospholipase A2 activity. CI-976 or 2,2-Dimethyl-N-(2,4,6-trimethoxyphenyl)dodecanamide inhibits its lysophosphatidylcholine acyltransferase activity. In terms of biological role, thiol-specific peroxidase that catalyzes the reduction of hydrogen peroxide and organic hydroperoxides to water and alcohols, respectively. Can reduce H(2)O(2) and short chain organic, fatty acid, and phospholipid hydroperoxides. Also has phospholipase activity, can therefore either reduce the oxidized sn-2 fatty acyl group of phospholipids (peroxidase activity) or hydrolyze the sn-2 ester bond of phospholipids (phospholipase activity). These activities are dependent on binding to phospholipids at acidic pH and to oxidized phospholipds at cytosolic pH. Plays a role in cell protection against oxidative stress by detoxifying peroxides and in phospholipid homeostasis. Exhibits acyl-CoA-dependent lysophospholipid acyltransferase which mediates the conversion of lysophosphatidylcholine (1-acyl-sn-glycero-3-phosphocholine or LPC) into phosphatidylcholine (1,2-diacyl-sn-glycero-3-phosphocholine or PC). Shows a clear preference for LPC as the lysophospholipid and for palmitoyl CoA as the fatty acyl substrate. This chain is Peroxiredoxin-6 (PRDX6), found in Homo sapiens (Human).